Consider the following 272-residue polypeptide: Tryptophan synthase alpha chain (272 aa).

Catalysis depends on proton acceptor residues glutamate 49 and glutamate 60.

The protein belongs to the TrpA family. Tetramer of two alpha and two beta chains.

The catalysed reaction is (1S,2R)-1-C-(indol-3-yl)glycerol 3-phosphate + L-serine = D-glyceraldehyde 3-phosphate + L-tryptophan + H2O. Its pathway is amino-acid biosynthesis; L-tryptophan biosynthesis; L-tryptophan from chorismate: step 5/5. Functionally, the alpha subunit is responsible for the aldol cleavage of indoleglycerol phosphate to indole and glyceraldehyde 3-phosphate. This is Tryptophan synthase alpha chain from Legionella pneumophila (strain Lens).